Consider the following 364-residue polypeptide: MSGNSIGQNFVVTTFGESHGKALGCIIDGCPPGLELNEADMQRDLDRRRPGTSRYTTARREPDEVRVLSGIFEGKTTGTSIGLMIENTDQRSKDYSNIKDLFRPGHADYTYQQKYGLRDYRGGGRSSARETAMRVAAGAVAKKYLKQVHGIEINGYLSQLGPIKADTVDFSQIEQNAFFFPDESKLDELDEYMRKLIKSGDSIGAKVSVVATGVPVGLGEPVFDRLDAEIAHALMGINAVKGVEIGDGFGVVNQKGSEHRDLMSPEGFASNHAGGILGGISSGQPIVAHIAMKPTSSISIPGESMTAQGDVAEVVTKGRHDPCVGIRAVPIAEAMLAIVLMDHLLRHRAQNMDVNSQTPEIGMR.

Residues Arg48 and Arg54 each coordinate NADP(+). Residues 125-127 (RSS), 238-239 (NA), Gly278, 293-297 (KPTSS), and Arg319 contribute to the FMN site.

Belongs to the chorismate synthase family. Homotetramer. The cofactor is FMNH2.

The catalysed reaction is 5-O-(1-carboxyvinyl)-3-phosphoshikimate = chorismate + phosphate. The protein operates within metabolic intermediate biosynthesis; chorismate biosynthesis; chorismate from D-erythrose 4-phosphate and phosphoenolpyruvate: step 7/7. In terms of biological role, catalyzes the anti-1,4-elimination of the C-3 phosphate and the C-6 proR hydrogen from 5-enolpyruvylshikimate-3-phosphate (EPSP) to yield chorismate, which is the branch point compound that serves as the starting substrate for the three terminal pathways of aromatic amino acid biosynthesis. This reaction introduces a second double bond into the aromatic ring system. This is Chorismate synthase from Shewanella sediminis (strain HAW-EB3).